Consider the following 348-residue polypeptide: Isopentenyl-diphosphate delta-isomerase (348 aa).

Position 5–6 (5–6 (RK)) interacts with substrate. FMN-binding positions include S61, 62 to 64 (SMT), S92, and N120. Substrate is bound at residue 92–94 (SMR). Residue Q159 participates in substrate binding. Mg(2+) is bound at residue E160. FMN is bound by residues K189, S214, T219, 269–271 (GLR), and 290–291 (AR).

Belongs to the IPP isomerase type 2 family. As to quaternary structure, homooctamer. Dimer of tetramers. Requires FMN as cofactor. It depends on NADPH as a cofactor. Mg(2+) serves as cofactor.

The protein localises to the cytoplasm. It catalyses the reaction isopentenyl diphosphate = dimethylallyl diphosphate. Involved in the biosynthesis of isoprenoids. Catalyzes the 1,3-allylic rearrangement of the homoallylic substrate isopentenyl (IPP) to its allylic isomer, dimethylallyl diphosphate (DMAPP). This is Isopentenyl-diphosphate delta-isomerase from Thermoplasma acidophilum (strain ATCC 25905 / DSM 1728 / JCM 9062 / NBRC 15155 / AMRC-C165).